Reading from the N-terminus, the 502-residue chain is Keratin, type II microfibrillar, component 5 (502 aa).

Ser1 is subject to Blocked amino end (Ser). The segment at 1 to 122 (SCRSYRISPG…PNAQCVKHQE (122 aa)) is head. In terms of domain architecture, IF rod spans 122 to 433 (EKEQIKNLNS…RLLEGEEQRL (312 aa)). The segment at 123–157 (KEQIKNLNSRFAAFIDKVRFLEQQNKLLETKWQFY) is coil 1A. Positions 158-167 (QNQRCCESNL) are linker 1. Residues 168-268 (EPLFNGYIET…YDEEIQILNA (101 aa)) form a coil 1B region. Lys228 is covalently cross-linked (Glycyl lysine isopeptide (Lys-Gly) (interchain with G-Cter in SUMO1)). A linker 12 region spans residues 269–285 (HISDTSVIVKMDNSRDL). Positions 286 to 429 (NMDCVVAEIK…ATYRRLLEGE (144 aa)) are coil 2. Positions 430-502 (EQRLCEGVGS…CGSSRSVRFA (73 aa)) are tail.

Belongs to the intermediate filament family. Hard keratin wool.

In terms of biological role, wool microfibrillar keratin. This chain is Keratin, type II microfibrillar, component 5, found in Ovis aries (Sheep).